Here is a 264-residue protein sequence, read N- to C-terminus: S-adenosylmethionine decarboxylase proenzyme (264 aa).

The active-site Schiff-base intermediate with substrate; via pyruvic acid is the S112. At S112 the chain carries Pyruvic acid (Ser); by autocatalysis. H117 (proton acceptor; for processing activity) is an active-site residue. C140 functions as the Proton donor; for catalytic activity in the catalytic mechanism.

Belongs to the prokaryotic AdoMetDC family. Type 2 subfamily. As to quaternary structure, heterooctamer of four alpha and four beta chains arranged as a tetramer of alpha/beta heterodimers. Requires pyruvate as cofactor. Is synthesized initially as an inactive proenzyme. Formation of the active enzyme involves a self-maturation process in which the active site pyruvoyl group is generated from an internal serine residue via an autocatalytic post-translational modification. Two non-identical subunits are generated from the proenzyme in this reaction, and the pyruvate is formed at the N-terminus of the alpha chain, which is derived from the carboxyl end of the proenzyme. The post-translation cleavage follows an unusual pathway, termed non-hydrolytic serinolysis, in which the side chain hydroxyl group of the serine supplies its oxygen atom to form the C-terminus of the beta chain, while the remainder of the serine residue undergoes an oxidative deamination to produce ammonia and the pyruvoyl group blocking the N-terminus of the alpha chain.

It carries out the reaction S-adenosyl-L-methionine + H(+) = S-adenosyl 3-(methylsulfanyl)propylamine + CO2. The protein operates within amine and polyamine biosynthesis; S-adenosylmethioninamine biosynthesis; S-adenosylmethioninamine from S-adenosyl-L-methionine: step 1/1. In terms of biological role, catalyzes the decarboxylation of S-adenosylmethionine to S-adenosylmethioninamine (dcAdoMet), the propylamine donor required for the synthesis of the polyamines spermine and spermidine from the diamine putrescine. This Salmonella agona (strain SL483) protein is S-adenosylmethionine decarboxylase proenzyme.